A 317-amino-acid chain; its full sequence is Protein phosphatase PTC7 homolog fig (317 aa).

In terms of domain architecture, PPM-type phosphatase spans 46–312; the sequence is PYLVTVVQGR…DDITLILASV (267 aa). Asp90, Gly91, and Asp235 together coordinate Mn(2+).

Belongs to the PP2C family. Mg(2+) serves as cofactor. Mn(2+) is required as a cofactor.

It carries out the reaction O-phospho-L-seryl-[protein] + H2O = L-seryl-[protein] + phosphate. The catalysed reaction is O-phospho-L-threonyl-[protein] + H2O = L-threonyl-[protein] + phosphate. The sequence is that of Protein phosphatase PTC7 homolog fig from Drosophila erecta (Fruit fly).